The sequence spans 259 residues: Probable ABC transporter permease protein RT0041 (259 aa).

5 consecutive transmembrane segments (helical) span residues 20 to 40 (VGIF…PPLY), 49 to 69 (LFIG…SGAV), 148 to 168 (VIAA…IGVM), 195 to 215 (LIDV…ISII), and 237 to 257 (AVVN…ELLF).

It belongs to the MlaE permease family.

The protein resides in the cell inner membrane. Could be part of an ABC transporter complex. This is Probable ABC transporter permease protein RT0041 from Rickettsia typhi (strain ATCC VR-144 / Wilmington).